The chain runs to 697 residues: MMRPVVVKEKQLNKSQIHAVEDEVRQAKTMDRDIVTHAMKQSVAKLNPKVMIKNPIMFVVEIGFIITFILSFLPSSSSSIPGWFNITVSLILLFTVLFANFAEALAEGRGKAQADSLKQSKKDVFANVVKENGDIVQVSATDLRKGDVVIVKQGEMIPNDGEVIKGLASVDESAITGESAPVIKEAGGDFCSVTGGTMVVSDEITIVITSNPGESFIDKMISLVEGAARQKTPNEIALNTVLTSLTLIFLIVVVTLPIFTNYLGFQIDTAVLVALLVCLIPTTIGGLLSAIGIAGMDRVTKFNVLAMSGKAVEAAGDINTIILDKTGTITFGNRMAHTLLPVGNETIEQVGKWAAISSVLDETPEGRSVIEYVQGKSISYNRELAEQGEFVPFKAETRMSGVDLQDGTKVRKGAVGAVIEWVESQGGTIPKDVNQKADLISKEGGTPLVVAVDNRIYGLIYLKDTVKPGMRERFEQLRQMGIKTVMCTGDNPLTAATIAKEAGVDEFVAECKPEDKIAVIKAEQDKGKLVAMTGDGTNDAPALAQADVGLAMNSGTTAAKEAANMIDLDSNPTKIIEVVGIGKQLLMTRGALTTFSIANDIAKYFAIIPAMFTLAIPQMEALNIMKLTSPLSAILSALIFNAVIIPLLIPLAMKGIAYKPMSSNALLSRNLLIYGLGGVIVPFIGIKVIDIIVGLFI.

The next 4 helical transmembrane spans lie at 55–75 (PIMF…FLPS), 79–99 (SIPG…VLFA), 245–265 (LTLI…YLGF), and 271–291 (VLVA…LSAI). D324 functions as the 4-aspartylphosphate intermediate in the catalytic mechanism. ATP is bound by residues D361, E365, 393–400 (FKAETRMS), and K412. Positions 535 and 539 each coordinate Mg(2+). A run of 3 helical transmembrane segments spans residues 605–625 (FAII…LNIM), 633–653 (AILS…PLAM), and 677–697 (GGVI…GLFI).

This sequence belongs to the cation transport ATPase (P-type) (TC 3.A.3) family. Type IA subfamily. In terms of assembly, the system is composed of three essential subunits: KdpA, KdpB and KdpC.

The protein resides in the cell membrane. The catalysed reaction is K(+)(out) + ATP + H2O = K(+)(in) + ADP + phosphate + H(+). Its function is as follows. Part of the high-affinity ATP-driven potassium transport (or Kdp) system, which catalyzes the hydrolysis of ATP coupled with the electrogenic transport of potassium into the cytoplasm. This subunit is responsible for energy coupling to the transport system and for the release of the potassium ions to the cytoplasm. The sequence is that of Potassium-transporting ATPase ATP-binding subunit from Bacillus cereus (strain G9842).